A 412-amino-acid chain; its full sequence is MTAKTLEKAPVSLGGFVHPLADSIYSVDELGTTLPASVTIYNDLGGHYEQINAGDGLINGDMSTEKRALDLAYSSTFAQPAGPRNQTFTYMGKFSIDSQYPGNWNPEGVINIVSAGILGMTQPSSASSSPASSVSPSHFSSTLSCTMAQNQADMEHIYSPPPPYSGCGEVYQDPSAFLSTSTCPISYPPPSYSSPKPNADSGLFPIIPDYAGFFQPPCQRDMQSMPDRKPFSCPLDSFKLPPPLTPLNTIRNFTLGGPGPDGPRLPTAYTPQNLPLRPILRPRKYPNRPSKTPVHERPYPCPAEGCDRRFSRSDELTRHIRIHTGHKPFQCRICMRNFSRSDHLTTHIRTHTGEKPFACDFCGRKFARSDERKRHTKIHLRQKERKSSSSSTGVSSSERGVATSICSSSSNQ.

The segment at 269–299 is disordered; that stretch reads YTPQNLPLRPILRPRKYPNRPSKTPVHERPY. 3 consecutive C2H2-type zinc fingers follow at residues 299–323, 329–351, and 357–379; these read YPCP…IRIH, FQCR…IRTH, and FACD…TKIH. Residues 371–412 form a disordered region; that stretch reads ERKRHTKIHLRQKERKSSSSSTGVSSSERGVATSICSSSSNQ. Residues 374-384 show a composition bias toward basic residues; that stretch reads RHTKIHLRQKE. Residues 388-401 show a composition bias toward low complexity; it reads SSSSTGVSSSERGV.

Belongs to the EGR C2H2-type zinc-finger protein family.

It is found in the nucleus. Sequence-specific DNA-binding transcription factor. Binds to two specific DNA sites located in the promoter region of HOXA4. The chain is Early growth response protein 2b (egr2b) from Danio rerio (Zebrafish).